A 623-amino-acid polypeptide reads, in one-letter code: Glutathione import ATP-binding protein GsiA (623 aa).

ABC transporter domains lie at Val-18–Leu-272 and Leu-317–Met-567. ATP-binding positions include Gly-52–Ser-59 and Gly-360–Ser-367.

It belongs to the ABC transporter superfamily. Glutathione importer (TC 3.A.1.5.11) family. In terms of assembly, the complex is composed of two ATP-binding proteins (GsiA), two transmembrane proteins (GsiC and GsiD) and a solute-binding protein (GsiB).

The protein resides in the cell inner membrane. It carries out the reaction glutathione(out) + ATP + H2O = glutathione(in) + ADP + phosphate + H(+). In terms of biological role, part of the ABC transporter complex GsiABCD involved in glutathione import. Responsible for energy coupling to the transport system. The polypeptide is Glutathione import ATP-binding protein GsiA (Pectobacterium atrosepticum (strain SCRI 1043 / ATCC BAA-672) (Erwinia carotovora subsp. atroseptica)).